Reading from the N-terminus, the 168-residue chain is Crossover junction endodeoxyribonuclease RuvC (168 aa).

Catalysis depends on residues Asp8, Glu68, and Asp140. The Mg(2+) site is built by Asp8, Glu68, and Asp140.

Belongs to the RuvC family. As to quaternary structure, homodimer which binds Holliday junction (HJ) DNA. The HJ becomes 2-fold symmetrical on binding to RuvC with unstacked arms; it has a different conformation from HJ DNA in complex with RuvA. In the full resolvosome a probable DNA-RuvA(4)-RuvB(12)-RuvC(2) complex forms which resolves the HJ. Mg(2+) serves as cofactor.

The protein localises to the cytoplasm. It carries out the reaction Endonucleolytic cleavage at a junction such as a reciprocal single-stranded crossover between two homologous DNA duplexes (Holliday junction).. Functionally, the RuvA-RuvB-RuvC complex processes Holliday junction (HJ) DNA during genetic recombination and DNA repair. Endonuclease that resolves HJ intermediates. Cleaves cruciform DNA by making single-stranded nicks across the HJ at symmetrical positions within the homologous arms, yielding a 5'-phosphate and a 3'-hydroxyl group; requires a central core of homology in the junction. The consensus cleavage sequence is 5'-(A/T)TT(C/G)-3'. Cleavage occurs on the 3'-side of the TT dinucleotide at the point of strand exchange. HJ branch migration catalyzed by RuvA-RuvB allows RuvC to scan DNA until it finds its consensus sequence, where it cleaves and resolves the cruciform DNA. This is Crossover junction endodeoxyribonuclease RuvC from Gluconacetobacter diazotrophicus (strain ATCC 49037 / DSM 5601 / CCUG 37298 / CIP 103539 / LMG 7603 / PAl5).